The following is a 96-amino-acid chain: Neurotoxin 23 (96 aa).

The first 22 residues, 1-22, serve as a signal peptide directing secretion; it reads MKNIVIIITVAVLFNLFGESLQ. An LCN-type CS-alpha/beta domain is found at 26 to 89; it reads FETYPLNQDD…FLAEIIDTCN (64 aa). 3 cysteine pairs are disulfide-bonded: Cys-40-Cys-63, Cys-49-Cys-68, and Cys-53-Cys-70.

Belongs to the long (3 C-C) scorpion toxin superfamily. In terms of tissue distribution, expressed by the venom gland.

The protein localises to the secreted. In Lychas mucronatus (Chinese swimming scorpion), this protein is Neurotoxin 23.